The following is a 195-amino-acid chain: Dynactin subunit 6 (195 aa).

Belongs to the dynactin subunits 5/6 family. Dynactin subunit 6 subfamily. As to quaternary structure, member of the pointed-end complex of the dynactin shoulder complex which contains dctn4, dctn5 and dctn6 subunits and Actr10. Within the complex dctn6 forms a heterodimer with dctn5. Interacts with plk1.

It is found in the cytoplasm. It localises to the cytoskeleton. The protein resides in the chromosome. Its subcellular location is the centromere. The protein localises to the kinetochore. Its function is as follows. Part of the dynactin complex that activates the molecular motor dynein for ultra-processive transport along microtubules. This Danio rerio (Zebrafish) protein is Dynactin subunit 6 (dctn6).